The sequence spans 227 residues: Cytidylate kinase (227 aa).

ATP is bound at residue 12–20 (GPSGAGKGT).

It belongs to the cytidylate kinase family. Type 1 subfamily.

It is found in the cytoplasm. It carries out the reaction CMP + ATP = CDP + ADP. It catalyses the reaction dCMP + ATP = dCDP + ADP. In Salmonella paratyphi A (strain ATCC 9150 / SARB42), this protein is Cytidylate kinase.